We begin with the raw amino-acid sequence, 534 residues long: Probable glycine dehydrogenase (decarboxylating) subunit 2 (534 aa).

Position 273 is an N6-(pyridoxal phosphate)lysine (K273).

This sequence belongs to the GcvP family. C-terminal subunit subfamily. As to quaternary structure, the glycine cleavage system is composed of four proteins: P, T, L and H. In this organism, the P 'protein' is a heterodimer of two subunits. It depends on pyridoxal 5'-phosphate as a cofactor.

It catalyses the reaction N(6)-[(R)-lipoyl]-L-lysyl-[glycine-cleavage complex H protein] + glycine + H(+) = N(6)-[(R)-S(8)-aminomethyldihydrolipoyl]-L-lysyl-[glycine-cleavage complex H protein] + CO2. The glycine cleavage system catalyzes the degradation of glycine. The P protein binds the alpha-amino group of glycine through its pyridoxal phosphate cofactor; CO(2) is released and the remaining methylamine moiety is then transferred to the lipoamide cofactor of the H protein. The chain is Probable glycine dehydrogenase (decarboxylating) subunit 2 from Bacillus cereus (strain ATCC 14579 / DSM 31 / CCUG 7414 / JCM 2152 / NBRC 15305 / NCIMB 9373 / NCTC 2599 / NRRL B-3711).